We begin with the raw amino-acid sequence, 328 residues long: MEGPEAVQRATELIEQRLAQEEETEKLRRSAPGKLSMDMLVLEEEKRLGVQSPALQKVKGQERVRKTSLDLRREIIDVGGIQNLIELRKKRKQKKRDALAAAQEPPPEPEEITGPVNEETFLKAAVEGKMKVIDKYLADGGSADTCDEFRRTALHRASLEGHMEILEKLLENGATVDFQDRLDCTAMHWACRGGHLEVVRLLQSRGADTNVRDKLLSTPLHVAVRTGHVEIVEHFLSLGLDINAKDREGDSALHDAVRLNRYKIIKLLLLHGADMMAKNLAGKTPTDLVQLWQADTRHALEHPEPESEQNGLERPGSGRETPQPIPAQ.

Ser-36 is modified (phosphoserine). Residue Ser-68 is modified to Phosphoserine; by PKB/AKT2. Residues 96-116 (RDALAAAQEPPPEPEEITGPV) are disordered. 5 ANK repeats span residues 116–145 (VNEETFLKAAVEGKMKVIDKYLADGGSADT), 149–178 (FRRTALHRASLEGHMEILEKLLENGATVDF), 182–211 (LDCTAMHWACRGGHLEVVRLLQSRGADTNV), 215–244 (LLSTPLHVAVRTGHVEIVEHFLSLGLDINA), and 248–277 (EGDSALHDAVRLNRYKIIKLLLLHGADMMA). The tract at residues 297–328 (RHALEHPEPESEQNGLERPGSGRETPQPIPAQ) is disordered.

As to quaternary structure, interacts with ID3; both proteins cooperate in myoblast differentiation. Interacts with TTN/titin. Interacts (via ANK repeats) with TCAP; the interaction is direct. Interacts with TJP1 (via PDZ domains). Interacts with PML; the interaction is direct. Interacts with p53/TP53. Interacts with YBX1. Interacts with AKT2. Phosphorylation at Ser-68 by PKB/AKT2 in response to oxidative stress induces translocation to the nucleus and negatively regulates myoblast differentiation. Expressed by myoblasts (at protein level). Expressed in skeletal and cardiac muscles.

It is found in the cytoplasm. It localises to the myofibril. The protein localises to the sarcomere. Its subcellular location is the i band. The protein resides in the cytosol. It is found in the nucleus. It localises to the PML body. Its function is as follows. Functions as a negative regulator of myocyte differentiation. May interact with both sarcoplasmic structural proteins and nuclear proteins to regulate gene expression during muscle development and in response to muscle stress. The sequence is that of Ankyrin repeat domain-containing protein 2 (Ankrd2) from Mus musculus (Mouse).